The primary structure comprises 468 residues: Arginine biosynthesis bifunctional protein ArgJ, mitochondrial (468 aa).

The transit peptide at Met1 to Phe23 directs the protein to the mitochondrion. Positions 198, 227, 238, 324, 463, and 468 each coordinate substrate. The Nucleophile role is filled by Thr238.

The protein belongs to the ArgJ family. In terms of assembly, heterodimer of an alpha and a beta chain. In terms of processing, the alpha and beta chains are autoproteolytically processed from a single precursor protein within the mitochondrion.

The protein resides in the mitochondrion matrix. It catalyses the reaction N(2)-acetyl-L-ornithine + L-glutamate = N-acetyl-L-glutamate + L-ornithine. The enzyme catalyses L-glutamate + acetyl-CoA = N-acetyl-L-glutamate + CoA + H(+). The protein operates within amino-acid biosynthesis; L-arginine biosynthesis; L-ornithine and N-acetyl-L-glutamate from L-glutamate and N(2)-acetyl-L-ornithine (cyclic): step 1/1. It participates in amino-acid biosynthesis; L-arginine biosynthesis; N(2)-acetyl-L-ornithine from L-glutamate: step 1/4. In terms of biological role, catalyzes two activities which are involved in the cyclic version of arginine biosynthesis: the synthesis of acetylglutamate from glutamate and acetyl-CoA, and of ornithine by transacetylation between acetylornithine and glutamate. The protein is Arginine biosynthesis bifunctional protein ArgJ, mitochondrial of Podospora anserina (strain S / ATCC MYA-4624 / DSM 980 / FGSC 10383) (Pleurage anserina).